Here is a 287-residue protein sequence, read N- to C-terminus: Pyridoxal kinase PdxY (287 aa).

Substrate is bound by residues Ser9 and 44–45 (TQ). ATP is bound by residues Asp111, Glu147, and Lys180. Residue Asp221 coordinates substrate.

The protein belongs to the pyridoxine kinase family. PdxY subfamily. Homodimer. Mg(2+) serves as cofactor.

It carries out the reaction pyridoxal + ATP = pyridoxal 5'-phosphate + ADP + H(+). The protein operates within cofactor metabolism; pyridoxal 5'-phosphate salvage; pyridoxal 5'-phosphate from pyridoxal: step 1/1. In terms of biological role, pyridoxal kinase involved in the salvage pathway of pyridoxal 5'-phosphate (PLP). Catalyzes the phosphorylation of pyridoxal to PLP. This is Pyridoxal kinase PdxY from Paraburkholderia phymatum (strain DSM 17167 / CIP 108236 / LMG 21445 / STM815) (Burkholderia phymatum).